Consider the following 294-residue polypeptide: Homoserine kinase (294 aa).

Position 83–93 (83–93 (RPKSGLGSSGA)) interacts with ATP.

It belongs to the GHMP kinase family. Homoserine kinase subfamily.

Its subcellular location is the cytoplasm. The catalysed reaction is L-homoserine + ATP = O-phospho-L-homoserine + ADP + H(+). It functions in the pathway amino-acid biosynthesis; L-threonine biosynthesis; L-threonine from L-aspartate: step 4/5. Catalyzes the ATP-dependent phosphorylation of L-homoserine to L-homoserine phosphate. In Pyrococcus abyssi (strain GE5 / Orsay), this protein is Homoserine kinase.